The chain runs to 761 residues: 1,4-alpha-glucan branching enzyme GlgB (761 aa).

Asp431 serves as the catalytic Nucleophile. Glu484 (proton donor) is an active-site residue.

Belongs to the glycosyl hydrolase 13 family. GlgB subfamily. As to quaternary structure, monomer.

The enzyme catalyses Transfers a segment of a (1-&gt;4)-alpha-D-glucan chain to a primary hydroxy group in a similar glucan chain.. The protein operates within glycan biosynthesis; glycogen biosynthesis. Its function is as follows. Catalyzes the formation of the alpha-1,6-glucosidic linkages in glycogen by scission of a 1,4-alpha-linked oligosaccharide from growing alpha-1,4-glucan chains and the subsequent attachment of the oligosaccharide to the alpha-1,6 position. The polypeptide is 1,4-alpha-glucan branching enzyme GlgB (Synechococcus sp. (strain WH7803)).